We begin with the raw amino-acid sequence, 212 residues long: Leucyl/phenylalanyl-tRNA--protein transferase (212 aa).

Belongs to the L/F-transferase family.

It is found in the cytoplasm. It catalyses the reaction N-terminal L-lysyl-[protein] + L-leucyl-tRNA(Leu) = N-terminal L-leucyl-L-lysyl-[protein] + tRNA(Leu) + H(+). The catalysed reaction is N-terminal L-arginyl-[protein] + L-leucyl-tRNA(Leu) = N-terminal L-leucyl-L-arginyl-[protein] + tRNA(Leu) + H(+). The enzyme catalyses L-phenylalanyl-tRNA(Phe) + an N-terminal L-alpha-aminoacyl-[protein] = an N-terminal L-phenylalanyl-L-alpha-aminoacyl-[protein] + tRNA(Phe). Functionally, functions in the N-end rule pathway of protein degradation where it conjugates Leu, Phe and, less efficiently, Met from aminoacyl-tRNAs to the N-termini of proteins containing an N-terminal arginine or lysine. The sequence is that of Leucyl/phenylalanyl-tRNA--protein transferase from Allorhizobium ampelinum (strain ATCC BAA-846 / DSM 112012 / S4) (Agrobacterium vitis (strain S4)).